The chain runs to 393 residues: NAD(P)H-quinone oxidoreductase subunit H, chloroplastic (393 aa).

Belongs to the complex I 49 kDa subunit family. NDH is composed of at least 16 different subunits, 5 of which are encoded in the nucleus.

It localises to the plastid. It is found in the chloroplast thylakoid membrane. It carries out the reaction a plastoquinone + NADH + (n+1) H(+)(in) = a plastoquinol + NAD(+) + n H(+)(out). It catalyses the reaction a plastoquinone + NADPH + (n+1) H(+)(in) = a plastoquinol + NADP(+) + n H(+)(out). Functionally, NDH shuttles electrons from NAD(P)H:plastoquinone, via FMN and iron-sulfur (Fe-S) centers, to quinones in the photosynthetic chain and possibly in a chloroplast respiratory chain. The immediate electron acceptor for the enzyme in this species is believed to be plastoquinone. Couples the redox reaction to proton translocation, and thus conserves the redox energy in a proton gradient. The protein is NAD(P)H-quinone oxidoreductase subunit H, chloroplastic of Sorghum bicolor (Sorghum).